Reading from the N-terminus, the 406-residue chain is Linalool 8-monooxygenase (406 aa).

Cysteine 355 lines the heme pocket.

The protein belongs to the cytochrome P450 family. The cofactor is heme.

It catalyses the reaction linalool + 2 reduced [NADPH--hemoprotein reductase] + 2 O2 = (6E)-8-oxolinalool + 2 oxidized [NADPH--hemoprotein reductase] + 3 H2O + 2 H(+). Its pathway is terpene metabolism; linalool degradation. In terms of biological role, catalyzes the 8-methyl hydroxylation of linalool. This chain is Linalool 8-monooxygenase (linC), found in Pseudomonas putida (Arthrobacter siderocapsulatus).